Reading from the N-terminus, the 349-residue chain is Phosphoribosylformylglycinamidine cyclo-ligase (349 aa).

It belongs to the AIR synthase family.

It is found in the cytoplasm. It carries out the reaction 2-formamido-N(1)-(5-O-phospho-beta-D-ribosyl)acetamidine + ATP = 5-amino-1-(5-phospho-beta-D-ribosyl)imidazole + ADP + phosphate + H(+). It functions in the pathway purine metabolism; IMP biosynthesis via de novo pathway; 5-amino-1-(5-phospho-D-ribosyl)imidazole from N(2)-formyl-N(1)-(5-phospho-D-ribosyl)glycinamide: step 2/2. The chain is Phosphoribosylformylglycinamidine cyclo-ligase from Methanococcus maripaludis (strain C5 / ATCC BAA-1333).